The chain runs to 795 residues: Lon protease (795 aa).

Residues 17–214 (YPLMPLRDIV…KVYKFLQDEI (198 aa)) form the Lon N-terminal domain. 370 to 377 (GPPGVGKT) contacts ATP. The region spanning 605–787 (KPLVGVATGL…EEVFKIALVR (183 aa)) is the Lon proteolytic domain. Residues Ser-692 and Lys-735 contribute to the active site.

The protein belongs to the peptidase S16 family. In terms of assembly, homohexamer. Organized in a ring with a central cavity.

Its subcellular location is the cytoplasm. The enzyme catalyses Hydrolysis of proteins in presence of ATP.. Its function is as follows. ATP-dependent serine protease that mediates the selective degradation of mutant and abnormal proteins as well as certain short-lived regulatory proteins. Required for cellular homeostasis and for survival from DNA damage and developmental changes induced by stress. Degrades polypeptides processively to yield small peptide fragments that are 5 to 10 amino acids long. Binds to DNA in a double-stranded, site-specific manner. The sequence is that of Lon protease from Aquifex aeolicus (strain VF5).